The following is a 442-amino-acid chain: Elongation factor 1-gamma (442 aa).

The region spanning 2–87 (AAGTLYTYPE…YLSNDVLRGS (86 aa)) is the GST N-terminal domain. The GST C-terminal domain maps to 88 to 216 (TPQASAQVLQ…VKLCEKMAQF (129 aa)). Composition is skewed to basic and acidic residues over residues 227–242 (KKEA…KEGG) and 249–263 (QEKK…KAAP). The segment at 227-273 (KKEAPIKKEKGGKEGGKQQPQQQEKKEKKKEEKKAAPAEEEMDECEA) is disordered. The 162-residue stretch at 281 to 442 (AKDPFAHLPK…KPFNQGKIFK (162 aa)) folds into the EF-1-gamma C-terminal domain.

As to quaternary structure, EF-1 is composed of four subunits: alpha, beta, delta, and gamma.

In terms of biological role, probably plays a role in anchoring the complex to other cellular components. The sequence is that of Elongation factor 1-gamma (eef1g) from Danio rerio (Zebrafish).